Here is a 313-residue protein sequence, read N- to C-terminus: Iron-sulfur protein required for NADH dehydrogenase, mitochondrial (313 aa).

The N-terminal 22 residues, 1 to 22 (MATVALLRSLRRRELHAAHISA), are a transit peptide targeting the mitochondrion. Position 51–58 (51–58 (GKGGVGKS)) interacts with ATP.

Belongs to the Mrp/NBP35 ATP-binding proteins family. [4Fe-4S] cluster serves as cofactor.

It is found in the mitochondrion matrix. Its function is as follows. Essential during early vegetative growth. Required for the assembly of the mitochondrial membrane respiratory chain NADH dehydrogenase (Complex I). Involved in mitochondrial translation activity. May deliver of one or more Fe-S clusters to complex I subunits. The chain is Iron-sulfur protein required for NADH dehydrogenase, mitochondrial from Arabidopsis thaliana (Mouse-ear cress).